Here is a 452-residue protein sequence, read N- to C-terminus: Bone morphogenetic protein 5 (452 aa).

The first 25 residues, 1–25 (MHWTVFLLRGIVGFLWSGWVQVGYA), serve as a signal peptide directing secretion. A propeptide spanning residues 26 to 314 (KGGLGDNHVH…ASEVLLRSVR (289 aa)) is cleaved from the precursor. N-linked (GlcNAc...) asparagine glycans are attached at residues Asn209, Asn325, Asn343, and Asn393. The disordered stretch occupies residues 316–345 (ASKRKNQNRNKSNSHQDPSRMPSAGDYNTS). 3 cysteine pairs are disulfide-bonded: Cys351-Cys417, Cys380-Cys449, and Cys384-Cys451.

It belongs to the TGF-beta family. In terms of assembly, interacts with ERFE; the interaction inhibits BMP-induced transcription of HAMP.

Its subcellular location is the secreted. Its function is as follows. Growth factor of the TGF-beta superfamily that plays essential roles in many developmental processes, including cartilage and bone formation or neurogenesis. Initiates the canonical BMP signaling cascade by associating with type I receptor BMPR1A and type II receptor BMPR2. In turn, BMPR1A propagates signal by phosphorylating SMAD1/5/8 that travel to the nucleus and act as activators and repressors of transcription of target genes. Can also signal through non-canonical pathway such as MAPK p38 signaling cascade to promote chondrogenic differentiation. Promotes the expression of HAMP, this is repressed by its interaction with ERFE. The sequence is that of Bone morphogenetic protein 5 (Bmp5) from Mus musculus (Mouse).